The primary structure comprises 848 residues: Paramyosin (848 aa).

Residues 1–9 (AFGSMSVAD) are nonhelical region. Residues 10–833 (LGSLTRLEDK…HLIRAKHRSS (824 aa)) adopt a coiled-coil conformation. Residues 834 to 848 (VVTGKNASASKIYVL) are nonhelical region.

This sequence belongs to the paramyosin family. In terms of assembly, homodimer.

It localises to the cytoplasm. It is found in the myofibril. Functionally, paramyosin is a major structural component of many thick filaments isolated from invertebrate muscles. This is Paramyosin from Dirofilaria immitis (Canine heartworm).